The sequence spans 359 residues: S-adenosylmethionine:tRNA ribosyltransferase-isomerase (359 aa).

It belongs to the QueA family. As to quaternary structure, monomer.

It is found in the cytoplasm. The enzyme catalyses 7-aminomethyl-7-carbaguanosine(34) in tRNA + S-adenosyl-L-methionine = epoxyqueuosine(34) in tRNA + adenine + L-methionine + 2 H(+). The protein operates within tRNA modification; tRNA-queuosine biosynthesis. Transfers and isomerizes the ribose moiety from AdoMet to the 7-aminomethyl group of 7-deazaguanine (preQ1-tRNA) to give epoxyqueuosine (oQ-tRNA). This is S-adenosylmethionine:tRNA ribosyltransferase-isomerase from Synechococcus elongatus (strain ATCC 33912 / PCC 7942 / FACHB-805) (Anacystis nidulans R2).